A 453-amino-acid polypeptide reads, in one-letter code: MNIVILAAGTGKRMRSALPKVLHPLAGRPLLSHVIDTARALAPSRLVVVIGHGAEQVRAAVAAPDVQFAVQEQQLGTGHAVRQALPLLDPSQPTLVLYGDVPLTRTATLKRLADAATDARYGVLTVTLDDPTGYGRIVRDQAGCVTRIVEQKDASPDELRIDEINTGIVVAPTAQLSMWLGALGNDNAQGEYYLTDVVEQAIEAGFEIVTTQPDDGWETLGVNSKAQLAELERIHQRNLADALLAAGVTLADPARIDVRGTLACGRDVSIDVNCVFEGDVTLADGVTIGANCVIRHAAIAAGARVDAFSHLDGATVGANAVVGPYARLRPGAVLAADAHVGNFVEVKNATLGQGSKANHLTYLGDADIGARVNVGAGTITCNYDGANKFRTVIEDDVFVGSDTQFVAPVRVGRGVTVAAGTTVWKDVAADMLVLNDKTQTAKSGYVRPVKKKS.

Residues Met-1 to Lys-225 are pyrophosphorylase. UDP-N-acetyl-alpha-D-glucosamine is bound by residues Leu-6 to Gly-9, Lys-20, Gln-71, Gly-76 to Thr-77, Tyr-98 to Asp-100, Gly-135, Glu-150, Asn-165, and Asn-223. Mg(2+) is bound at residue Asp-100. Asn-223 is a Mg(2+) binding site. The interval Ala-226–Ala-246 is linker. Residues Gly-247–Ser-453 are N-acetyltransferase. Positions 329 and 347 each coordinate UDP-N-acetyl-alpha-D-glucosamine. The active-site Proton acceptor is the His-359. UDP-N-acetyl-alpha-D-glucosamine contacts are provided by Tyr-362 and Asn-373. Residues Ala-376, Asn-382 to Tyr-383, Ser-401, and Ala-419 each bind acetyl-CoA.

The protein in the N-terminal section; belongs to the N-acetylglucosamine-1-phosphate uridyltransferase family. In the C-terminal section; belongs to the transferase hexapeptide repeat family. Homotrimer. Mg(2+) serves as cofactor.

The protein resides in the cytoplasm. It carries out the reaction alpha-D-glucosamine 1-phosphate + acetyl-CoA = N-acetyl-alpha-D-glucosamine 1-phosphate + CoA + H(+). It catalyses the reaction N-acetyl-alpha-D-glucosamine 1-phosphate + UTP + H(+) = UDP-N-acetyl-alpha-D-glucosamine + diphosphate. It participates in nucleotide-sugar biosynthesis; UDP-N-acetyl-alpha-D-glucosamine biosynthesis; N-acetyl-alpha-D-glucosamine 1-phosphate from alpha-D-glucosamine 6-phosphate (route II): step 2/2. It functions in the pathway nucleotide-sugar biosynthesis; UDP-N-acetyl-alpha-D-glucosamine biosynthesis; UDP-N-acetyl-alpha-D-glucosamine from N-acetyl-alpha-D-glucosamine 1-phosphate: step 1/1. Its pathway is bacterial outer membrane biogenesis; LPS lipid A biosynthesis. Functionally, catalyzes the last two sequential reactions in the de novo biosynthetic pathway for UDP-N-acetylglucosamine (UDP-GlcNAc). The C-terminal domain catalyzes the transfer of acetyl group from acetyl coenzyme A to glucosamine-1-phosphate (GlcN-1-P) to produce N-acetylglucosamine-1-phosphate (GlcNAc-1-P), which is converted into UDP-GlcNAc by the transfer of uridine 5-monophosphate (from uridine 5-triphosphate), a reaction catalyzed by the N-terminal domain. This Burkholderia pseudomallei (strain K96243) protein is Bifunctional protein GlmU.